The following is a 354-amino-acid chain: Protein RecA (354 aa).

ATP is bound at residue 65-72 (GPESSGKT).

Belongs to the RecA family.

The protein resides in the cytoplasm. Functionally, can catalyze the hydrolysis of ATP in the presence of single-stranded DNA, the ATP-dependent uptake of single-stranded DNA by duplex DNA, and the ATP-dependent hybridization of homologous single-stranded DNAs. It interacts with LexA causing its activation and leading to its autocatalytic cleavage. This is Protein RecA from Pseudomonas savastanoi pv. phaseolicola (strain 1448A / Race 6) (Pseudomonas syringae pv. phaseolicola (strain 1448A / Race 6)).